The primary structure comprises 357 residues: Phenylalanine--tRNA ligase alpha subunit (357 aa).

Glu258 contributes to the Mg(2+) binding site.

Belongs to the class-II aminoacyl-tRNA synthetase family. Phe-tRNA synthetase alpha subunit type 1 subfamily. Tetramer of two alpha and two beta subunits. The cofactor is Mg(2+).

The protein localises to the cytoplasm. The catalysed reaction is tRNA(Phe) + L-phenylalanine + ATP = L-phenylalanyl-tRNA(Phe) + AMP + diphosphate + H(+). This is Phenylalanine--tRNA ligase alpha subunit from Caulobacter vibrioides (strain ATCC 19089 / CIP 103742 / CB 15) (Caulobacter crescentus).